Reading from the N-terminus, the 96-residue chain is C-C motif chemokine 20 (96 aa).

Positions 1–26 are cleaved as a signal peptide; it reads MCCTKSLLLAALMSVLLLHLCGESEA. 2 disulfide bridges follow: Cys32–Cys58 and Cys33–Cys74.

This sequence belongs to the intercrine beta (chemokine CC) family. In terms of processing, C-terminal processed forms which lack 1, 3 or 6 amino acids are produced by proteolytic cleavage after secretion from peripheral blood monocytes. Expressed in the seminal plasma, endometrial fluid and follicular fluid (at protein level). Expressed predominantly in the liver, lymph nodes, appendix, peripheral blood lymphocytes, and fetal lung. Low levels seen in thymus, prostate, testis, small intestine and colon.

Its subcellular location is the secreted. Acts as a ligand for C-C chemokine receptor CCR6. Signals through binding and activation of CCR6 and induces a strong chemotactic response and mobilization of intracellular calcium ions. The ligand-receptor pair CCL20-CCR6 is responsible for the chemotaxis of dendritic cells (DC), effector/memory T-cells and B-cells and plays an important role at skin and mucosal surfaces under homeostatic and inflammatory conditions, as well as in pathology, including cancer and various autoimmune diseases. CCL20 acts as a chemotactic factor that attracts lymphocytes and, slightly, neutrophils, but not monocytes. Involved in the recruitment of both the pro-inflammatory IL17 producing helper T-cells (Th17) and the regulatory T-cells (Treg) to sites of inflammation. Required for optimal migration of thymic natural regulatory T cells (nTregs) and DN1 early thymocyte progenitor cells. C-terminal processed forms have been shown to be equally chemotactically active for leukocytes. Positively regulates sperm motility and chemotaxis via its binding to CCR6 which triggers Ca2+ mobilization in the sperm which is important for its motility. Inhibits proliferation of myeloid progenitors in colony formation assays. May be involved in formation and function of the mucosal lymphoid tissues by attracting lymphocytes and dendritic cells towards epithelial cells. Possesses antibacterial activity towards E.coli ATCC 25922 and S.aureus ATCC 29213. This Homo sapiens (Human) protein is C-C motif chemokine 20 (CCL20).